The sequence spans 79 residues: Sec-independent protein translocase protein TatA (79 aa).

Residues Met1 to Gly21 form a helical membrane-spanning segment. Over residues Ile43–Ser52 the composition is skewed to basic and acidic residues. Residues Ile43 to Ala79 are disordered.

The protein belongs to the TatA/E family. In terms of assembly, the Tat system comprises two distinct complexes: a TatABC complex, containing multiple copies of TatA, TatB and TatC subunits, and a separate TatA complex, containing only TatA subunits. Substrates initially bind to the TatABC complex, which probably triggers association of the separate TatA complex to form the active translocon.

The protein localises to the cell membrane. Functionally, part of the twin-arginine translocation (Tat) system that transports large folded proteins containing a characteristic twin-arginine motif in their signal peptide across membranes. TatA could form the protein-conducting channel of the Tat system. This is Sec-independent protein translocase protein TatA from Mycobacterium sp. (strain JLS).